The chain runs to 67 residues: ATP synthase protein 8 (67 aa).

The chain crosses the membrane as a helical span at residues 8 to 24; that stretch reads TWFITITSMTITLFIMF. Position 54 is an N6-acetyllysine; alternate (K54). K54 carries the N6-succinyllysine; alternate modification. N6-acetyllysine is present on K57.

It belongs to the ATPase protein 8 family. As to quaternary structure, F-type ATPases have 2 components, CF(1) - the catalytic core - and CF(0) - the membrane proton channel. Component of an ATP synthase complex composed of ATP5PB, ATP5MC1, ATP5F1E, ATP5PD, ATP5ME, ATP5PF, ATP5MF, MT-ATP6, MT-ATP8, ATP5F1A, ATP5F1B, ATP5F1D, ATP5F1C, ATP5PO, ATP5MG, ATP5MK and ATP5MJ. Interacts with PRICKLE3.

Its subcellular location is the mitochondrion membrane. Its function is as follows. Mitochondrial membrane ATP synthase (F(1)F(0) ATP synthase or Complex V) produces ATP from ADP in the presence of a proton gradient across the membrane which is generated by electron transport complexes of the respiratory chain. F-type ATPases consist of two structural domains, F(1) - containing the extramembraneous catalytic core and F(0) - containing the membrane proton channel, linked together by a central stalk and a peripheral stalk. During catalysis, ATP synthesis in the catalytic domain of F(1) is coupled via a rotary mechanism of the central stalk subunits to proton translocation. Part of the complex F(0) domain. Minor subunit located with subunit a in the membrane. This chain is ATP synthase protein 8 (MT-ATP8), found in Rhinoceros unicornis (Greater Indian rhinoceros).